Consider the following 318-residue polypeptide: Pantothenate kinase (318 aa).

96–103 (GSVAVGKS) is an ATP binding site.

Belongs to the prokaryotic pantothenate kinase family.

It localises to the cytoplasm. The catalysed reaction is (R)-pantothenate + ATP = (R)-4'-phosphopantothenate + ADP + H(+). The protein operates within cofactor biosynthesis; coenzyme A biosynthesis; CoA from (R)-pantothenate: step 1/5. This Coxiella burnetii (strain RSA 493 / Nine Mile phase I) protein is Pantothenate kinase.